The sequence spans 630 residues: CREB-regulated transcription coactivator 1 (630 aa).

Phosphoserine occurs at positions 64 and 113. Disordered regions lie at residues 142–174 (ADTS…GPQD), 187–221 (GMEE…VPGI), 256–331 (SPLP…LSPL), and 356–475 (QAGS…HTST). Thr-149 carries the post-translational modification Phosphothreonine. A Phosphoserine; by SIK1 and SIK2 modification is found at Ser-151. Over residues 151 to 167 (SDSALHQSTMTPTQAES) the composition is skewed to polar residues. Thr-161 carries the post-translational modification Phosphothreonine. A compositionally biased stretch (basic and acidic residues) spans 194-208 (ETDKTLSKQSWDSKK). A Nuclear export signal motif is present at residues 242–258 (TGGSLPDLSTIHFPSPL). Over residues 256 to 270 (SPLPTPLDPEEPPFP) the composition is skewed to pro residues. Composition is skewed to polar residues over residues 292-301 (GMNTPSSSPQ) and 310-331 (LSLS…LSPL). Residues 361–384 (QPPPQPQPPPPPPPVSQQQPPPPQ) show a composition bias toward pro residues. The span at 385 to 394 (VSVGLPQGGP) shows a compositional bias: low complexity. Polar residues-rich tracts occupy residues 414–426 (VPST…TESP) and 450–475 (PATQ…HTST).

Belongs to the TORC family. As to quaternary structure, binds, as a tetramer, through its N-terminal region, with the bZIP domain of CREB1. 'Arg-314' in the bZIP domain of CREB1 is essential for this interaction. Interaction, via its C-terminal, with TAF4, enhances recruitment of TAF4 to CREB1. Interacts with 14-3-3 proteins, including YWHAE/14-3-3 epsilon. Interacts with calmodulin-dependent catalytic subunit PPP3CA/calcineurin A. Post-translationally, phosphorylation/dephosphorylation states of Ser-151 are required for regulating transduction of CREB activity. TORCs are inactive when phosphorylated, and active when dephosphorylated at this site. This primary site of phosphorylation is mediated by SIKs (SIK1 and SIK2), is regulated by cAMP and calcium levels and is dependent on the phosphorylation of SIKs by LKB1. Highly expressed in developing cortical neurons, peaking during dendrite development.

It localises to the cytoplasm. The protein resides in the nucleus. Transcriptional coactivator for CREB1 which activates transcription through both consensus and variant cAMP response element (CRE) sites. Acts as a coactivator, in the SIK/TORC signaling pathway, being active when dephosphorylated and acts independently of CREB1 'Ser-133' phosphorylation. Enhances the interaction of CREB1 with TAF4. Regulates the expression of specific CREB-activated genes such as the steroidogenic gene, StAR. Potent coactivator of PGC1alpha and inducer of mitochondrial biogenesis in muscle cells. In the hippocampus, involved in late-phase long-term potentiation (L-LTP) maintenance at the Schaffer collateral-CA1 synapses. May be required for dendritic growth of developing cortical neurons. In concert with SIK1, regulates the light-induced entrainment of the circadian clock. In response to light stimulus, coactivates the CREB-mediated transcription of PER1 which plays an important role in the photic entrainment of the circadian clock. The polypeptide is CREB-regulated transcription coactivator 1 (Crtc1) (Rattus norvegicus (Rat)).